Here is a 295-residue protein sequence, read N- to C-terminus: Glycine N-acyltransferase-like protein Keg1 (295 aa).

Residue Lys41 is modified to N6-acetyllysine; alternate. Lys41 is modified (N6-succinyllysine; alternate). The residue at position 43 (Lys43) is an N6-acetyllysine. The residue at position 48 (Lys48) is an N6-acetyllysine; alternate. The residue at position 48 (Lys48) is an N6-succinyllysine; alternate. 2 positions are modified to N6-acetyllysine: Lys80 and Lys83. Lys124, Lys128, and Lys140 each carry N6-acetyllysine; alternate. An N6-succinyllysine; alternate mark is found at Lys124, Lys128, and Lys140. Residue Lys150 is modified to N6-acetyllysine. Lys255 is modified (N6-acetyllysine; alternate). The residue at position 255 (Lys255) is an N6-succinyllysine; alternate.

The protein belongs to the glycine N-acyltransferase family. Binds to microtubules.

It localises to the cytoplasm. The protein localises to the cytoskeleton. The protein resides in the microtubule organizing center. It is found in the centrosome. It carries out the reaction an acyl-CoA + glycine = an N-acylglycine + CoA + H(+). Functionally, acyltransferase which transfers the acyl group to the N-terminus of glycine. Can conjugate a multitude of substrates to form a variety of N-acylglycines. This Mus musculus (Mouse) protein is Glycine N-acyltransferase-like protein Keg1 (Keg1).